Consider the following 361-residue polypeptide: Phosphoserine aminotransferase (361 aa).

Residue Arg43 participates in L-glutamate binding. Residues 77-78, Trp103, Thr153, Asp173, and Gln196 each bind pyridoxal 5'-phosphate; that span reads AS. Lys197 is modified (N6-(pyridoxal phosphate)lysine). Pyridoxal 5'-phosphate is bound at residue 238 to 239; that stretch reads NT.

The protein belongs to the class-V pyridoxal-phosphate-dependent aminotransferase family. SerC subfamily. Homodimer. It depends on pyridoxal 5'-phosphate as a cofactor.

Its subcellular location is the cytoplasm. The catalysed reaction is O-phospho-L-serine + 2-oxoglutarate = 3-phosphooxypyruvate + L-glutamate. It carries out the reaction 4-(phosphooxy)-L-threonine + 2-oxoglutarate = (R)-3-hydroxy-2-oxo-4-phosphooxybutanoate + L-glutamate. It functions in the pathway amino-acid biosynthesis; L-serine biosynthesis; L-serine from 3-phospho-D-glycerate: step 2/3. Catalyzes the reversible conversion of 3-phosphohydroxypyruvate to phosphoserine and of 3-hydroxy-2-oxo-4-phosphonooxybutanoate to phosphohydroxythreonine. The sequence is that of Phosphoserine aminotransferase from Bacillus anthracis (strain A0248).